The primary structure comprises 217 residues: Uracil-DNA glycosylase (217 aa).

Residue Asp-62 is the Proton acceptor of the active site.

Belongs to the uracil-DNA glycosylase (UDG) superfamily. UNG family.

Its subcellular location is the cytoplasm. The catalysed reaction is Hydrolyzes single-stranded DNA or mismatched double-stranded DNA and polynucleotides, releasing free uracil.. Excises uracil residues from the DNA which can arise as a result of misincorporation of dUMP residues by DNA polymerase or due to deamination of cytosine. The polypeptide is Uracil-DNA glycosylase (Streptococcus equi subsp. zooepidemicus (strain MGCS10565)).